Consider the following 196-residue polypeptide: MATPLDEKLRALAADEAMKCGLDVEKLTFTRAGAKSSVKIAVDADERPDLDLLEEASQLIGAAFDAAEEAQQIDLGPSYTLEVTTPGLDFPLREARNFQRNIGRLANLPGGGKGRIAAVENDEVAILPAAKKKAGKKSQGKKAGKKTPQAPVQIYPRAELAGSTIEVEFSPAPAAEQELLGLTMAEYHELAKSDEA.

The segment covering 131 to 145 has biased composition (basic residues); it reads KKKAGKKSQGKKAGK. A disordered region spans residues 131–153; it reads KKKAGKKSQGKKAGKKTPQAPVQ.

This sequence belongs to the RimP family.

The protein resides in the cytoplasm. In terms of biological role, required for maturation of 30S ribosomal subunits. This chain is Ribosome maturation factor RimP, found in Corynebacterium urealyticum (strain ATCC 43042 / DSM 7109).